The following is a 161-amino-acid chain: Large ribosomal subunit protein uL16 (161 aa).

The interval 140 to 161 (LNKGNYKPAKTPVTADDSESSS) is disordered.

It belongs to the universal ribosomal protein uL16 family. As to quaternary structure, part of the 50S ribosomal subunit.

Functionally, binds 23S rRNA and is also seen to make contacts with the A and possibly P site tRNAs. The protein is Large ribosomal subunit protein uL16 of Prochlorococcus marinus (strain NATL1A).